Consider the following 388-residue polypeptide: Sporulation-specific mitogen-activated protein kinase SMK1 (388 aa).

The Protein kinase domain occupies 38-337; it reads YEIIQFLGKG…VEQAISHPFL (300 aa). ATP-binding positions include 44 to 52 and lysine 69; that span reads LGKGAYGTV. Aspartate 166 (proton acceptor) is an active-site residue. The TXY signature appears at 207 to 209; it reads TNY.

Belongs to the protein kinase superfamily. CMGC Ser/Thr protein kinase family. MAP kinase subfamily. In terms of assembly, interacts with GSC2. Mg(2+) serves as cofactor. Dually phosphorylated on Thr-207 and Tyr-209, which activates the enzyme.

It carries out the reaction L-seryl-[protein] + ATP = O-phospho-L-seryl-[protein] + ADP + H(+). The catalysed reaction is L-threonyl-[protein] + ATP = O-phospho-L-threonyl-[protein] + ADP + H(+). With respect to regulation, activated by tyrosine and threonine phosphorylation. In terms of biological role, required for spore wall assembly. Required for proper deposition of the two outer layers of the spore wall, the chitosan and dityrosine layers. Negatively regulates GSC2, an alternate catalytic subunit of the 1,3-beta-glucan synthase (GS). Participates in a developmentally regulated signal transduction pathway that coordinates cytodifferentiation events with the transcriptional program. This Saccharomyces cerevisiae (strain ATCC 204508 / S288c) (Baker's yeast) protein is Sporulation-specific mitogen-activated protein kinase SMK1 (SMK1).